The following is a 405-amino-acid chain: S-adenosylmethionine sensor upstream of mTORC1 (405 aa).

A disordered region spans residues Met-1–Glu-34. Residues Arg-25–Glu-34 show a composition bias toward basic and acidic residues. The S-adenosyl-L-methionine site is built by Arg-95, Gly-172, Asp-190, Asp-202, Phe-203, and Ser-244.

The protein belongs to the BMT2/SAMTOR family. As to quaternary structure, interacts with the DEPDC5 subunit of the GATOR1 complex; interaction is disrupted when SAMTOR binds S-adenosyl-L-methionine. Interacts with the KICSTOR complex; interaction is disrupted when SAMTOR binds S-adenosyl-L-methionine.

Its function is as follows. S-adenosyl-L-methionine-binding protein that acts as an inhibitor of mTORC1 signaling via interaction with the GATOR1 and KICSTOR complexes. Acts as a sensor of S-adenosyl-L-methionine to signal methionine sufficiency to mTORC1: in presence of methionine, binds S-adenosyl-L-methionine, leading to disrupt interaction with the GATOR1 and KICSTOR complexes and promote mTORC1 signaling. Upon methionine starvation, S-adenosyl-L-methionine levels are reduced, thereby promoting the association with GATOR1 and KICSTOR, leading to inhibit mTORC1 signaling. Probably also acts as a S-adenosyl-L-methionine-dependent methyltransferase (Potential). The polypeptide is S-adenosylmethionine sensor upstream of mTORC1 (Homo sapiens (Human)).